Here is a 213-residue protein sequence, read N- to C-terminus: Glutathione S-transferase DHAR2 (213 aa).

Cys-6 bears the S-glutathionyl cysteine mark. Glutathione contacts are provided by Lys-8 and Asp-19. L-ascorbate contacts are provided by Lys-8 and Asp-19. One can recognise a GST N-terminal domain in the interval 10–83 (AVGAPDVLGD…DVIVGLLEEK (74 aa)). Cys-20 carries the post-translational modification S-glutathionyl cysteine. Cys-20 serves as the catalytic Nucleophile. A Glutathione-binding motif is present at residues 20-25 (CPFSQR). The glutathione site is built by Lys-47, Val-60, Ser-73, His-160, and Trp-207. The 130-residue stretch at 84–213 (YPEPSLKTPP…VAGWESKVNA (130 aa)) folds into the GST C-terminal domain. Lys-210 lines the L-ascorbate pocket.

This sequence belongs to the GST superfamily. DHAR family. As to quaternary structure, monomer. Spontaneous S-glutathionylation in the presence of oxidized glutathione (GSSG).

The protein resides in the cytoplasm. Its subcellular location is the cytosol. It carries out the reaction RX + glutathione = an S-substituted glutathione + a halide anion + H(+). It catalyses the reaction L-dehydroascorbate + 2 glutathione = glutathione disulfide + L-ascorbate. Its function is as follows. Displays a dual function. As a soluble protein, exhibits glutathione-dependent thiol transferase and dehydroascorbate (DHA) reductase activities. Exhibits glutathione-dependent thiol transferase and dehydroascorbate (DHA) reductase activities. Key component of the ascorbate recycling system. Involved in the redox homeostasis, especially in scavenging of ROS under oxidative stresses. Plays a role in ozone tolerance. The chain is Glutathione S-transferase DHAR2 (DHAR2) from Arabidopsis thaliana (Mouse-ear cress).